The following is a 549-amino-acid chain: Cytoplasmic trehalase (549 aa).

Substrate contacts are provided by residues Arg-168, 175-176 (WD), Asn-212, 221-223 (RSQ), 292-294 (RDE), and Gly-324. Catalysis depends on proton donor/acceptor residues Asp-326 and Glu-509. Glu-525 provides a ligand contact to substrate.

Belongs to the glycosyl hydrolase 37 family. In terms of assembly, monomer.

It is found in the cytoplasm. The enzyme catalyses alpha,alpha-trehalose + H2O = alpha-D-glucose + beta-D-glucose. Its pathway is glycan degradation; trehalose degradation; D-glucose from alpha,alpha-trehalose: step 1/1. Its function is as follows. Hydrolyzes trehalose to glucose. Could be involved, in cells returning to low osmolarity conditions, in the utilization of the accumulated cytoplasmic trehalose, which was synthesized in response to high osmolarity. This is Cytoplasmic trehalase from Escherichia coli (strain 55989 / EAEC).